A 266-amino-acid polypeptide reads, in one-letter code: Thymidylate synthase (266 aa).

DUMP contacts are provided by residues Arg-21 and 127-128 (RR). Cys-147 functions as the Nucleophile in the catalytic mechanism. Residues 168 to 171 (RSAD), Asn-179, and 209 to 211 (HIY) each bind dUMP. Asp-171 contributes to the (6R)-5,10-methylene-5,6,7,8-tetrahydrofolate binding site. Ala-265 is a (6R)-5,10-methylene-5,6,7,8-tetrahydrofolate binding site.

This sequence belongs to the thymidylate synthase family. Bacterial-type ThyA subfamily. Homodimer.

Its subcellular location is the cytoplasm. The enzyme catalyses dUMP + (6R)-5,10-methylene-5,6,7,8-tetrahydrofolate = 7,8-dihydrofolate + dTMP. Its pathway is pyrimidine metabolism; dTTP biosynthesis. Functionally, catalyzes the reductive methylation of 2'-deoxyuridine-5'-monophosphate (dUMP) to 2'-deoxythymidine-5'-monophosphate (dTMP) while utilizing 5,10-methylenetetrahydrofolate (mTHF) as the methyl donor and reductant in the reaction, yielding dihydrofolate (DHF) as a by-product. This enzymatic reaction provides an intracellular de novo source of dTMP, an essential precursor for DNA biosynthesis. In Brachyspira hyodysenteriae (strain ATCC 49526 / WA1), this protein is Thymidylate synthase.